The chain runs to 366 residues: GTPase Obg (366 aa).

In terms of domain architecture, Obg spans 1–162; that stretch reads MRFVDEAVIK…KSLRLELKIL (162 aa). The tract at residues 125-150 is disordered; the sequence is RGGKGNEHFKSSTMQAPRFSQPGEPG. The OBG-type G domain maps to 163–335; it reads ADAGLLGLPN…VVSEMWRMLA (173 aa). Residues 169–176, 194–198, 218–221, 288–291, and 316–318 each bind GTP; these read GLPNAGKS, FTTLV, DIPG, NKID, and SAL. Mg(2+)-binding residues include Ser-176 and Thr-196.

Belongs to the TRAFAC class OBG-HflX-like GTPase superfamily. OBG GTPase family. As to quaternary structure, monomer. Mg(2+) is required as a cofactor.

Its subcellular location is the cytoplasm. Its function is as follows. An essential GTPase which binds GTP, GDP and possibly (p)ppGpp with moderate affinity, with high nucleotide exchange rates and a fairly low GTP hydrolysis rate. Plays a role in control of the cell cycle, stress response, ribosome biogenesis and in those bacteria that undergo differentiation, in morphogenesis control. This chain is GTPase Obg, found in Oleidesulfovibrio alaskensis (strain ATCC BAA-1058 / DSM 17464 / G20) (Desulfovibrio alaskensis).